A 329-amino-acid polypeptide reads, in one-letter code: Phosphate acetyltransferase (329 aa).

Belongs to the phosphate acetyltransferase and butyryltransferase family.

The protein localises to the cytoplasm. The enzyme catalyses acetyl-CoA + phosphate = acetyl phosphate + CoA. It functions in the pathway metabolic intermediate biosynthesis; acetyl-CoA biosynthesis; acetyl-CoA from acetate: step 2/2. This chain is Phosphate acetyltransferase (pta), found in Staphylococcus epidermidis (strain ATCC 35984 / DSM 28319 / BCRC 17069 / CCUG 31568 / BM 3577 / RP62A).